A 476-amino-acid chain; its full sequence is Glutamyl-tRNA(Gln) amidotransferase subunit A (476 aa).

Residues lysine 70 and serine 145 each act as charge relay system in the active site. Catalysis depends on serine 169, which acts as the Acyl-ester intermediate.

This sequence belongs to the amidase family. GatA subfamily. Heterotrimer of A, B and C subunits.

The catalysed reaction is L-glutamyl-tRNA(Gln) + L-glutamine + ATP + H2O = L-glutaminyl-tRNA(Gln) + L-glutamate + ADP + phosphate + H(+). Allows the formation of correctly charged Gln-tRNA(Gln) through the transamidation of misacylated Glu-tRNA(Gln) in organisms which lack glutaminyl-tRNA synthetase. The reaction takes place in the presence of glutamine and ATP through an activated gamma-phospho-Glu-tRNA(Gln). This chain is Glutamyl-tRNA(Gln) amidotransferase subunit A, found in Methanosarcina mazei (strain ATCC BAA-159 / DSM 3647 / Goe1 / Go1 / JCM 11833 / OCM 88) (Methanosarcina frisia).